The sequence spans 250 residues: Cell division protein ZapD (250 aa).

This sequence belongs to the ZapD family. As to quaternary structure, interacts with FtsZ.

The protein localises to the cytoplasm. Functionally, cell division factor that enhances FtsZ-ring assembly. Directly interacts with FtsZ and promotes bundling of FtsZ protofilaments, with a reduction in FtsZ GTPase activity. This chain is Cell division protein ZapD, found in Yersinia pestis bv. Antiqua (strain Antiqua).